A 337-amino-acid chain; its full sequence is Molybdate import system permease protein MolB (337 aa).

Residues 1-5 (MQPDS) lie on the Cytoplasmic side of the membrane. The chain crosses the membrane as a helical span at residues 6 to 25 (YPKILFGLTLLLVITAVISL). Residues 26-51 (GIGRYSLSVPQIGQILWAKATALEID) lie on the Periplasmic side of the membrane. A helical transmembrane segment spans residues 52 to 87 (PVQQQVIFQVRLPRILTALCVGAGLALSGVVLQGIF). The Cytoplasmic portion of the chain corresponds to 88–98 (RNPLVNPHIIG). The chain crosses the membrane as a helical span at residues 99–113 (VTSGSAFGGTLAIFF). At 114 to 116 (GFS) the chain is on the periplasmic side. A helical membrane pass occupies residues 117-140 (LYGLFTSTILFGFGTLALVFLFSF). Residues 141–146 (KFNQRS) lie on the Cytoplasmic side of the membrane. A helical membrane pass occupies residues 147-171 (LLMLILIGMILSGLFSALVSLLQYI). The Periplasmic portion of the chain corresponds to 172 to 193 (SDTEEKLPSIVFWLMGSFATSN). Residues 194–214 (WEKLLFFFVPFLLCSSILLSL) form a helical membrane-spanning segment. Over 215 to 234 (SWRLNLLSLDEKEAKALGVK) the chain is Cytoplasmic. The helical transmembrane segment at 235-257 (MAPLRWLVIFLSGSLVACQVAIS) threads the bilayer. The Periplasmic segment spans residues 258–264 (GSIGWVG). The chain crosses the membrane as a helical span at residues 265-275 (LIIPHLSRMLV). Over 276-278 (GAN) the chain is Cytoplasmic. A helical transmembrane segment spans residues 279-304 (HQSLLPCTMLVGATYMLLVDNVARSL). Residues 305-310 (SDAEIP) are Periplasmic-facing. A helical transmembrane segment spans residues 311 to 329 (ISILTALIGAPLFGVLVYK). Residues 330-337 (LKRGGMNE) are Cytoplasmic-facing.

Belongs to the binding-protein-dependent transport system permease family. FecCD subfamily. As to quaternary structure, the complex is composed of two ATP-binding proteins (MolC), two transmembrane proteins (MolB) and a solute-binding protein (MolA).

It is found in the cell inner membrane. Its activity is regulated as follows. The MolBCA complex shows a decrease in affinity in the presence of increasing concentrations of substrate and nucleotide. In terms of biological role, part of the ABC transporter complex MolBCA involved in molybdate import. Responsible for the translocation of the substrate across the membrane. Functions as a low-affinity molybdate transporter. The chain is Molybdate import system permease protein MolB from Haemophilus influenzae (strain ATCC 51907 / DSM 11121 / KW20 / Rd).